Consider the following 254-residue polypeptide: Major prion protein (254 aa).

Residues 1–22 (MANLSYWLLALFVATWTDVGLC) form the signal peptide. Positions 23 to 231 (KKRPKPGGWN…SQAYYDGRRS (209 aa)) are interaction with GRB2, ERI3 and SYN1. Residues 25–104 (RPKPGGWNTG…THNQWNKPSK (80 aa)) are disordered. 5 tandem repeats follow at residues 51–59 (PQGGGTWGQ), 60–67 (PHGGGWGQ), 68–75 (PHGGGWGQ), 76–83 (PHGGGWGQ), and 84–91 (PHGGGWGQ). Residues 51-91 (PQGGGTWGQPHGGGWGQPHGGGWGQPHGGGWGQPHGGGWGQ) are 5 X 8 AA tandem repeats of P-H-G-G-G-W-G-Q. Residues 52–95 (QGGGTWGQPHGGGWGQPHGGGWGQPHGGGWGQPHGGGWGQGGGT) show a composition bias toward gly residues. Residues histidine 61, glycine 62, glycine 63, histidine 69, glycine 70, glycine 71, histidine 77, glycine 78, glycine 79, histidine 85, glycine 86, and glycine 87 each coordinate Cu(2+). A prP27-30 (protease resistant core) region spans residues 90 to 231 (GQGGGTHNQW…SQAYYDGRRS (142 aa)). Cysteine 179 and cysteine 214 are oxidised to a cystine. Residues asparagine 181 and asparagine 197 are each glycosylated (N-linked (GlcNAc...) asparagine). Serine 231 carries the GPI-anchor amidated serine lipid modification. Residues 232–254 (SAVLFSSPPVILLISFLIFLIVG) constitute a propeptide, removed in mature form.

Belongs to the prion family. As to quaternary structure, monomer and homodimer. Has a tendency to aggregate into amyloid fibrils containing a cross-beta spine, formed by a steric zipper of superposed beta-strands. Soluble oligomers may represent an intermediate stage on the path to fibril formation. Copper binding may promote oligomerization. Interacts with GRB2, APP, ERI3/PRNPIP and SYN1. Mislocalized cytosolically exposed PrP interacts with MGRN1; this interaction alters MGRN1 subcellular location and causes lysosomal enlargement. Interacts with KIAA1191.

It is found in the cell membrane. The protein localises to the golgi apparatus. Functionally, its primary physiological function is unclear. Has cytoprotective activity against internal or environmental stresses. May play a role in neuronal development and synaptic plasticity. May be required for neuronal myelin sheath maintenance. May play a role in iron uptake and iron homeostasis. Soluble oligomers are toxic to cultured neuroblastoma cells and induce apoptosis (in vitro). Association with GPC1 (via its heparan sulfate chains) targets PRNP to lipid rafts. Also provides Cu(2+) or Zn(2+) for the ascorbate-mediated GPC1 deaminase degradation of its heparan sulfate side chains. This chain is Major prion protein (PRNP), found in Cricetulus griseus (Chinese hamster).